Reading from the N-terminus, the 333-residue chain is Chlorophyllide reductase 35.5 kDa chain (333 aa).

Positions 1–17 (MTDAPELKAFDQRLRDE) are enriched in basic and acidic residues. Residues 1 to 30 (MTDAPELKAFDQRLRDEAAEEPTLEVPQGE) are disordered. ATP is bound by residues 45 to 50 (GIGKSF) and K74. S49 is a Mg(2+) binding site. [4Fe-4S] cluster is bound by residues C130 and C165. 219 to 220 (NK) lines the ATP pocket.

This sequence belongs to the NifH/BchL/ChlL family. As to quaternary structure, homodimer. Chlorophyllide reductase is composed of three subunits; BchX, BchY and BchZ. The cofactor is [4Fe-4S] cluster.

It carries out the reaction 3-deacetyl-3-vinylbacteriochlorophyllide a + 2 oxidized [2Fe-2S]-[ferredoxin] + ADP + phosphate = chlorophyllide a + 2 reduced [2Fe-2S]-[ferredoxin] + ATP + H2O + H(+). The catalysed reaction is bacteriochlorophyllide a + 2 oxidized [2Fe-2S]-[ferredoxin] + ADP + phosphate = 3-acetyl-3-devinylchlorophyllide a + 2 reduced [2Fe-2S]-[ferredoxin] + ATP + H2O + H(+). It catalyses the reaction 3-deacetyl-3-(1-hydroxyethyl)bacteriochlorophyllide a + 2 oxidized [2Fe-2S]-[ferredoxin] + ADP + phosphate = 3-devinyl-3-(1-hydroxyethyl)chlorophyllide a + 2 reduced [2Fe-2S]-[ferredoxin] + ATP + H2O + H(+). Its pathway is porphyrin-containing compound metabolism; bacteriochlorophyll biosynthesis. Its function is as follows. Converts chlorophylls (Chl) into bacteriochlorophylls (BChl) by reducing ring B of the tetrapyrrole. In Cereibacter sphaeroides (strain ATCC 17023 / DSM 158 / JCM 6121 / CCUG 31486 / LMG 2827 / NBRC 12203 / NCIMB 8253 / ATH 2.4.1.) (Rhodobacter sphaeroides), this protein is Chlorophyllide reductase 35.5 kDa chain (bchX).